The following is a 196-amino-acid chain: Histone H1.0-B (196 aa).

Disordered regions lie at residues 1–29 and 86–196; these read MAENSAATPAAKPKRSKALKKSTDHPKYS and GVGA…GRKK. Residues 24–97 form the H15 domain; the sequence is DHPKYSDMIL…GASGSFRLAK (74 aa). The segment covering 104–196 has biased composition (basic residues); sequence PAKKPKKEIK…ASPKKSGRKK (93 aa).

Belongs to the histone H1/H5 family.

Its subcellular location is the nucleus. It localises to the chromosome. Its function is as follows. Histones H1 are necessary for the condensation of nucleosome chains into higher-order structures. The histones H1.0 are found in cells that are in terminal stages of differentiation or that have low rates of cell division. This chain is Histone H1.0-B (h1-0-b), found in Xenopus laevis (African clawed frog).